The following is a 750-amino-acid chain: Alpha-galactosidase C (750 aa).

The first 26 residues, 1-26 (MFRSTATVAAATAMGLLTATGHGSLA), serve as a signal peptide directing secretion. Residues Asn-58, Asn-162, Asn-186, Asn-194, Asn-366, Asn-428, Asn-432, and Asn-453 are each glycosylated (N-linked (GlcNAc...) asparagine). Residue Asp-511 is the Nucleophile of the active site. Asp-573 functions as the Proton donor in the catalytic mechanism.

The protein belongs to the glycosyl hydrolase 36 family. Homotetramer. Mg(2+) is required as a cofactor. NAD(+) serves as cofactor.

The protein resides in the secreted. It catalyses the reaction Hydrolysis of terminal, non-reducing alpha-D-galactose residues in alpha-D-galactosides, including galactose oligosaccharides, galactomannans and galactolipids.. Hydrolyzes a variety of simple alpha-D-galactoside as well as more complex molecules such as oligosaccharides and polysaccharides. Active on paranitrophenyl-alpha-galactoside, raffinose, locust bean gum and gum guar. This chain is Alpha-galactosidase C (aglC), found in Emericella nidulans (strain FGSC A4 / ATCC 38163 / CBS 112.46 / NRRL 194 / M139) (Aspergillus nidulans).